A 195-amino-acid polypeptide reads, in one-letter code: Der GTPase-activating protein YihI (195 aa).

The segment at 1-81 is disordered; the sequence is MSRTKKTRRI…KAVVKEVKDP (81 aa). Composition is skewed to basic and acidic residues over residues 9 to 23, 38 to 49, and 66 to 81; these read RITDIMPARKTDKPK, TRYELDAQAREE, and DPAEQKKAVVKEVKDP.

This sequence belongs to the YihI family. Interacts with Der.

Its function is as follows. A GTPase-activating protein (GAP) that modifies Der/EngA GTPase function. May play a role in ribosome biogenesis. The sequence is that of Der GTPase-activating protein YihI from Mannheimia haemolytica (Pasteurella haemolytica).